We begin with the raw amino-acid sequence, 522 residues long: MISAVLDTQGDHPQQQAGDRAAPSVPVPGNKTVLPLARPNPNRKRVLFVTSEIADLVKTGGLGDVSAALPRAMAHLHDVRVLIPGYPQVLHSENPIHIIGELGGHAALPACKIGRMDMPDGLVIYVLICPELYEREGTPYGANNGRDWPDNHIRFARLGLAAADIAANLAQIHWCPDLVHAHDWPAGLAPAYMHWRGQRTPTLFTIHNLAYQGVVSLASCPELGIPEHALQQEGMEFYGKLSFLKAGMAYASHITTVSATYAQEITTPAFGCGLDGFLASKTQQGLLSGIPNGIDESWDAATDAHLLTPFSIGDWDGKAANAAHVRQMFGLDASSGPLFAVVSRLVYQKGLDLTEAVAEFIVQSGGQIAIIGRGEPEEEQSMRALARRFPGRIGVHIGFNETDARRMFAGSDFLLMPSRYEPCGLSQMYAQRFGSLPVARNTGGLADTIENGVTGFLFDESTVASYQEALTRAFKVFAYPALLNAMRCRAMAAPFNWCKAVEPYAELYEQLVAKALGQAARQ.

Residues 1 to 29 (MISAVLDTQGDHPQQQAGDRAAPSVPVPG) are disordered. Lys-58 provides a ligand contact to ADP-alpha-D-glucose.

The protein belongs to the glycosyltransferase 1 family. Bacterial/plant glycogen synthase subfamily.

It carries out the reaction [(1-&gt;4)-alpha-D-glucosyl](n) + ADP-alpha-D-glucose = [(1-&gt;4)-alpha-D-glucosyl](n+1) + ADP + H(+). It functions in the pathway glycan biosynthesis; glycogen biosynthesis. Functionally, synthesizes alpha-1,4-glucan chains using ADP-glucose. This is Glycogen synthase from Pseudomonas fluorescens (strain ATCC BAA-477 / NRRL B-23932 / Pf-5).